A 464-amino-acid polypeptide reads, in one-letter code: L-cystine uptake protein TcyP (464 aa).

Helical transmembrane passes span 3 to 23 (TLLV…LYYM), 34 to 54 (VFTA…IYEP), 73 to 93 (YVKL…ISAF), 107 to 127 (GLII…GIAA), 184 to 204 (PTST…FIGV), 225 to 245 (IVMR…LALM), 263 to 283 (FVLA…LLIA), 347 to 367 (AGIY…IDPL), 371 to 391 (FILT…GVGG), and 395 to 415 (FAAL…ALVI).

The protein belongs to the dicarboxylate/amino acid:cation symporter (DAACS) (TC 2.A.23) family.

It localises to the membrane. In terms of biological role, mediates uptake of L-cystine, the oxidized form of L-cysteine. The chain is L-cystine uptake protein TcyP from Bacillus thuringiensis (strain Al Hakam).